The sequence spans 667 residues: tRNA 5-methylaminomethyl-2-thiouridine biosynthesis bifunctional protein MnmC (667 aa).

Residues 1–215 (MKFINGILFN…KREMIRAYFN (215 aa)) form a tRNA (mnm(5)s(2)U34)-methyltransferase region. The FAD-dependent cmnm(5)s(2)U34 oxidoreductase stretch occupies residues 240-667 (IGAGIAGIVT…LIRKLKKGLK (428 aa)).

The protein in the N-terminal section; belongs to the methyltransferase superfamily. tRNA (mnm(5)s(2)U34)-methyltransferase family. It in the C-terminal section; belongs to the DAO family. FAD is required as a cofactor.

It localises to the cytoplasm. The catalysed reaction is 5-aminomethyl-2-thiouridine(34) in tRNA + S-adenosyl-L-methionine = 5-methylaminomethyl-2-thiouridine(34) in tRNA + S-adenosyl-L-homocysteine + H(+). In terms of biological role, catalyzes the last two steps in the biosynthesis of 5-methylaminomethyl-2-thiouridine (mnm(5)s(2)U) at the wobble position (U34) in tRNA. Catalyzes the FAD-dependent demodification of cmnm(5)s(2)U34 to nm(5)s(2)U34, followed by the transfer of a methyl group from S-adenosyl-L-methionine to nm(5)s(2)U34, to form mnm(5)s(2)U34. The sequence is that of tRNA 5-methylaminomethyl-2-thiouridine biosynthesis bifunctional protein MnmC from Campylobacter hominis (strain ATCC BAA-381 / DSM 21671 / CCUG 45161 / LMG 19568 / NCTC 13146 / CH001A).